A 213-amino-acid polypeptide reads, in one-letter code: GTP cyclohydrolase 1 (213 aa).

Cys104, His107, and Cys175 together coordinate Zn(2+).

Belongs to the GTP cyclohydrolase I family. As to quaternary structure, toroid-shaped homodecamer, composed of two pentamers of five dimers.

It carries out the reaction GTP + H2O = 7,8-dihydroneopterin 3'-triphosphate + formate + H(+). It functions in the pathway cofactor biosynthesis; 7,8-dihydroneopterin triphosphate biosynthesis; 7,8-dihydroneopterin triphosphate from GTP: step 1/1. The protein is GTP cyclohydrolase 1 of Brucella abortus (strain 2308).